The primary structure comprises 409 residues: G2/mitotic-specific cyclin-B (409 aa).

It belongs to the cyclin family. Cyclin AB subfamily. Interacts with the CDK1 protein kinase to form a serine/threonine kinase holoenzyme complex also known as maturation promoting factor (MPF). The cyclin subunit imparts substrate specificity to the complex.

Essential for the control of the cell cycle at the G2/M (mitosis) transition. The sequence is that of G2/mitotic-specific cyclin-B from Arbacia punctulata (Punctuate sea urchin).